Consider the following 342-residue polypeptide: GTPase Obg (342 aa).

Positions 1 to 159 constitute an Obg domain; sequence MQFIDRAEIE…RNLRLELKLL (159 aa). In terms of domain architecture, OBG-type G spans 160-328; the sequence is AEVGIIGLPN…LLQAIWHRLD (169 aa). Residues 166-173, 191-195, 213-216, 280-283, and 309-311 contribute to the GTP site; these read GLPNAGKS, FTTLV, DIPG, NKVD, and SAV. 2 residues coordinate Mg(2+): S173 and T193.

Belongs to the TRAFAC class OBG-HflX-like GTPase superfamily. OBG GTPase family. As to quaternary structure, monomer. Mg(2+) is required as a cofactor.

It localises to the cytoplasm. An essential GTPase which binds GTP, GDP and possibly (p)ppGpp with moderate affinity, with high nucleotide exchange rates and a fairly low GTP hydrolysis rate. Plays a role in control of the cell cycle, stress response, ribosome biogenesis and in those bacteria that undergo differentiation, in morphogenesis control. This Crocosphaera subtropica (strain ATCC 51142 / BH68) (Cyanothece sp. (strain ATCC 51142)) protein is GTPase Obg.